The chain runs to 151 residues: ATP synthase subunit b' (151 aa).

A helical membrane pass occupies residues 18-38; the sequence is TLPLMALQVVLLTFILNALFF.

The protein belongs to the ATPase B chain family. F-type ATPases have 2 components, F(1) - the catalytic core - and F(0) - the membrane proton channel. F(1) has five subunits: alpha(3), beta(3), gamma(1), delta(1), epsilon(1). F(0) has four main subunits: a(1), b(1), b'(1) and c(10-14). The alpha and beta chains form an alternating ring which encloses part of the gamma chain. F(1) is attached to F(0) by a central stalk formed by the gamma and epsilon chains, while a peripheral stalk is formed by the delta, b and b' chains.

The protein localises to the cellular thylakoid membrane. Functionally, f(1)F(0) ATP synthase produces ATP from ADP in the presence of a proton or sodium gradient. F-type ATPases consist of two structural domains, F(1) containing the extramembraneous catalytic core and F(0) containing the membrane proton channel, linked together by a central stalk and a peripheral stalk. During catalysis, ATP synthesis in the catalytic domain of F(1) is coupled via a rotary mechanism of the central stalk subunits to proton translocation. Component of the F(0) channel, it forms part of the peripheral stalk, linking F(1) to F(0). The b'-subunit is a diverged and duplicated form of b found in plants and photosynthetic bacteria. This Prochlorococcus marinus (strain MIT 9313) protein is ATP synthase subunit b'.